Consider the following 99-residue polypeptide: MSSTSAASAAGQGALPAYDTPLGITNPPIDELLERTSSKYALVIYSAKRARQINDYYNQLGDGILEYVGPLVEPGLQEKPLSIALREIHADLLEHTEGE.

Residues 1 to 10 (MSSTSAASAA) show a composition bias toward low complexity. Residues 1–20 (MSSTSAASAAGQGALPAYDT) form a disordered region.

This sequence belongs to the RNA polymerase subunit omega family. As to quaternary structure, the RNAP catalytic core consists of 2 alpha, 1 beta, 1 beta' and 1 omega subunit. When a sigma factor is associated with the core the holoenzyme is formed, which can initiate transcription.

It carries out the reaction RNA(n) + a ribonucleoside 5'-triphosphate = RNA(n+1) + diphosphate. Its function is as follows. Promotes RNA polymerase assembly. Latches the N- and C-terminal regions of the beta' subunit thereby facilitating its interaction with the beta and alpha subunits. In Rhodococcus erythropolis (strain PR4 / NBRC 100887), this protein is DNA-directed RNA polymerase subunit omega.